Consider the following 422-residue polypeptide: NADH-quinone oxidoreductase subunit F (422 aa).

Residues 1–26 (MLKEEDKIFTNLHGQQSHDLKSSKKR) form a disordered region. Residues 16-26 (QSHDLKSSKKR) show a composition bias toward basic and acidic residues. 54–63 (GRGGAGFSTG) lines the NAD(+) pocket. An FMN-binding site is contributed by 166-213 (GAGAYICGEETALLESLEGKKGMPRLKPPFPAGFGLYGCPTTINNVES). Residues Cys344, Cys347, Cys350, and Cys390 each coordinate [4Fe-4S] cluster.

The protein belongs to the complex I 51 kDa subunit family. It depends on FMN as a cofactor. Requires [4Fe-4S] cluster as cofactor.

The catalysed reaction is a quinone + NADH + 5 H(+)(in) = a quinol + NAD(+) + 4 H(+)(out). NDH-1 shuttles electrons from NADH, via FMN and iron-sulfur (Fe-S) centers, to quinones in the respiratory chain. Couples the redox reaction to proton translocation (for every two electrons transferred, four hydrogen ions are translocated across the cytoplasmic membrane), and thus conserves the redox energy in a proton gradient. In Rickettsia felis (strain ATCC VR-1525 / URRWXCal2) (Rickettsia azadi), this protein is NADH-quinone oxidoreductase subunit F (nuoF).